The sequence spans 91 residues: Potassium channel toxin MeuTXK-beta-2 (91 aa).

Positions 1–19 are cleaved as a signal peptide; the sequence is MQRNLVVLLFLGMVALSSC. The BetaSPN-type CS-alpha/beta domain occupies 54–91; sequence QFGCSAYQGYCDDHCQDIEKKEGFCHGFKCKCGIPMGF. 3 disulfides stabilise this stretch: cysteine 57–cysteine 78, cysteine 64–cysteine 83, and cysteine 68–cysteine 85.

The protein belongs to the long chain scorpion toxin family. Class 1 subfamily. As to expression, expressed by the venom gland.

The protein localises to the secreted. Has a low affinity binding to potassium channels of rat brain synaptosomes. Displays weak antibacterial activity against Stenotrophomonas sp. Strongly inhibits the development of the Plasmodium berghei ookinetes. Displays slight hemolytic effect on mouse erythrocytes. Induces cytolysis on Xenopus oocytes at high concentrations. Is not toxic towards mice and towards the insect Tenebrio molitor. The sequence is that of Potassium channel toxin MeuTXK-beta-2 from Mesobuthus eupeus (Lesser Asian scorpion).